The sequence spans 553 residues: Flotillin family inner membrane protein YqiK (553 aa).

Residues 1 to 9 lie on the Periplasmic side of the membrane; it reads MDDIVNSVP. Residues 10 to 30 form a helical membrane-spanning segment; that stretch reads SWMFTAIIAVCILFIIGIIFA. Residues 31–553 are Cytoplasmic-facing; that stretch reads RLYRRASAEQ…STTPVEEKAE (523 aa).

It belongs to the band 7/mec-2 family. Flotillin subfamily. In terms of assembly, homooligomerizes.

It is found in the cell inner membrane. The protein localises to the membrane raft. In terms of biological role, found in membrane microdomains that may be equivalent to eukaryotic membrane rafts. FMMs are highly dynamic and increase in number as cells age. Flotillins are thought to be important factors in membrane fluidity. This Escherichia coli (strain K12) protein is Flotillin family inner membrane protein YqiK (yqiK).